Consider the following 1549-residue polypeptide: Zinc finger MYM-type protein 4 (1549 aa).

At Ala-2 the chain carries N-acetylalanine. The tract at residues 83–108 (VVSSDNEDEQDCSSKDNLVSSVHTDG) is disordered. Positions 97 to 106 (KDNLVSSVHT) are enriched in polar residues. Thr-106 carries the phosphothreonine modification. Residues Ser-109 and Ser-121 each carry the phosphoserine modification. Residues Lys-139 and Lys-148 each participate in a glycyl lysine isopeptide (Lys-Gly) (interchain with G-Cter in SUMO2) cross-link. Ser-161 is subject to Phosphoserine. Lys-195 is covalently cross-linked (Glycyl lysine isopeptide (Lys-Gly) (interchain with G-Cter in SUMO2)). Ser-197 is subject to Phosphoserine. Residues Lys-201 and Lys-232 each participate in a glycyl lysine isopeptide (Lys-Gly) (interchain with G-Cter in SUMO2) cross-link. Ser-242 carries the phosphoserine modification. Lys-250 participates in a covalent cross-link: Glycyl lysine isopeptide (Lys-Gly) (interchain with G-Cter in SUMO1); alternate. Residue Lys-250 forms a Glycyl lysine isopeptide (Lys-Gly) (interchain with G-Cter in SUMO2); alternate linkage. A disordered region spans residues 267–291 (GLLDRVKDEPDNAQEYSHGQQQKTQ). Residues Lys-273, Lys-289, Lys-327, Lys-400, Lys-428, and Lys-430 each participate in a glycyl lysine isopeptide (Lys-Gly) (interchain with G-Cter in SUMO2) cross-link. A compositionally biased stretch (polar residues) spans 280-290 (QEYSHGQQQKT). MYM-type zinc fingers lie at residues 362–402 (QLFC…PKDV), 414–457 (KDFC…RHEV), 464–499 (HKLCSDACFSKFRSANNLTMNCCENCGGYCYSGSGQ), 510–544 (KKFCSSMCVTSYKQKSAKITPCALCKSLRSSAEMI), 554–592 (ELFCSVNCLSAYRVKMVTSAGVQVQCNSCKTSAIPQYHL), 600–631 (RNFCSYSCVVAFQNLFNKPTGMNSSVVPLSQG), 708–742 (FQFCGKNCCDEYKKINNVMAMCEYCKIEKIIKETV), 749–788 (KSFCSEGCKLLYKHDLGKRWGSHCKMCSYCLQTSPKLIQN), and 795–829 (EDFCCEECMSKYTVLFYQMAKCDGCKRQGKLSESL). Residues Lys-1035 and Lys-1062 each participate in a glycyl lysine isopeptide (Lys-Gly) (interchain with G-Cter in SUMO2) cross-link. Residues Ser-1065 and Ser-1072 each carry the phosphoserine modification. Residues Lys-1081 and Lys-1128 each participate in a glycyl lysine isopeptide (Lys-Gly) (interchain with G-Cter in SUMO2) cross-link. The disordered stretch occupies residues 1124–1185 (DSELKPFSKG…RRGRKKSVVP (62 aa)). Basic and acidic residues predominate over residues 1125–1135 (SELKPFSKGET). Residues 1161 to 1182 (SRTRRRHRDGFPQPRRRGRKKS) show a composition bias toward basic residues. A phosphoserine mark is found at Ser-1182 and Ser-1257. Residue Lys-1432 forms a Glycyl lysine isopeptide (Lys-Gly) (interchain with G-Cter in SUMO2) linkage. Residues Ser-1540, Ser-1543, and Ser-1548 each carry the phosphoserine modification.

Its function is as follows. Plays a role in the regulation of cell morphology and cytoskeletal organization. The polypeptide is Zinc finger MYM-type protein 4 (Zmym4) (Mus musculus (Mouse)).